The sequence spans 325 residues: Methionyl-tRNA formyltransferase (325 aa).

111–114 lines the (6S)-5,6,7,8-tetrahydrofolate pocket; sequence SILP.

The protein belongs to the Fmt family.

It catalyses the reaction L-methionyl-tRNA(fMet) + (6R)-10-formyltetrahydrofolate = N-formyl-L-methionyl-tRNA(fMet) + (6S)-5,6,7,8-tetrahydrofolate + H(+). In terms of biological role, attaches a formyl group to the free amino group of methionyl-tRNA(fMet). The formyl group appears to play a dual role in the initiator identity of N-formylmethionyl-tRNA by promoting its recognition by IF2 and preventing the misappropriation of this tRNA by the elongation apparatus. The chain is Methionyl-tRNA formyltransferase from Microcystis aeruginosa (strain NIES-843 / IAM M-2473).